A 551-amino-acid polypeptide reads, in one-letter code: Harmonin (551 aa).

The tract at residues 1–86 (MDRKVAREFR…LTPRRSRKLK (86 aa)) is N-terminal domain. 2 PDZ domains span residues 87-169 (EVRL…HIGL) and 211-293 (KVFI…AGAG). The segment at 194–532 (GGRSSLGSPG…QKAWNQGDWI (339 aa)) is mediates interaction with MYO7B. Residue S219 is modified to Phosphoserine. Positions 318–377 (LMQKRLAMESNKILQEQQEMERQRKKEIAQKAAEENERYRKEMEQIVEEEEKFRKQWEED) form a coiled coil. Residues 401 to 425 (KPKYDLGVDPEFDPADDLDGGTNKR) are disordered. Positions 408-419 (VDPEFDPADDLD) are enriched in acidic residues. In terms of domain architecture, PDZ 3 spans 452–536 (DVRLLRVKKE…NQGDWIDLVV (85 aa)).

Part of the IMAC/intermicrovillar adhesion complex/intermicrovillar tip-link complex composed of ANKS4B, MYO7B, USH1C, CDHR2 and CDHR5. Part of a complex composed of USH1C, USH1G and MYO7A. Interacts with F-actin. Interacts with USH2A. Interacts with SLC4A7. Interacts (via PDZ1 domain) with the C-terminus of USHBP1. Interacts (via N-terminus and PDZ 2 domain) with CDH23. Interacts with USH1G. Interacts with MYO7B. Interacts with CDHR2 and CDHR5; may mediate their interaction with MYO7B at the microvilli tip. Interacts (via PDZ 1 domain) with ANKS4B. Interacts (via PDZ 1 domain) with DOCK4.

Its subcellular location is the cytoplasm. The protein localises to the cytosol. It localises to the cytoskeleton. The protein resides in the cell projection. It is found in the microvillus. In terms of biological role, anchoring/scaffolding protein that is a part of the functional network formed by USH1C, USH1G, CDH23 and MYO7A that mediates mechanotransduction in cochlear hair cells. Required for normal development and maintenance of cochlear hair cell bundles. As part of the intermicrovillar adhesion complex/IMAC plays a role in brush border differentiation, controlling microvilli organization and length. Probably plays a central regulatory role in the assembly of the complex, recruiting CDHR2, CDHR5 and MYO7B to the microvilli tips. In Bos taurus (Bovine), this protein is Harmonin (USH1C).